The chain runs to 358 residues: Uroporphyrinogen decarboxylase (358 aa).

Substrate contacts are provided by residues 27–31 (RQAGR), aspartate 77, tyrosine 154, serine 209, and histidine 330.

Belongs to the uroporphyrinogen decarboxylase family. In terms of assembly, homodimer.

The protein resides in the cytoplasm. It catalyses the reaction uroporphyrinogen III + 4 H(+) = coproporphyrinogen III + 4 CO2. The protein operates within porphyrin-containing compound metabolism; protoporphyrin-IX biosynthesis; coproporphyrinogen-III from 5-aminolevulinate: step 4/4. Functionally, catalyzes the decarboxylation of four acetate groups of uroporphyrinogen-III to yield coproporphyrinogen-III. The sequence is that of Uroporphyrinogen decarboxylase from Acinetobacter baylyi (strain ATCC 33305 / BD413 / ADP1).